A 225-amino-acid chain; its full sequence is Ribonuclease 3 (225 aa).

The 123-residue stretch at 5-127 (IDKLERKLGY…IIGAIYLDSD (123 aa)) folds into the RNase III domain. A Mg(2+)-binding site is contributed by glutamate 40. The active site involves aspartate 44. Mg(2+) contacts are provided by aspartate 113 and glutamate 116. Glutamate 116 is a catalytic residue. The DRBM domain occupies 154-224 (DPKTRLQEFL…AETALEQLTN (71 aa)). The interval 204 to 225 (GTSRRKAEQAAAETALEQLTNG) is disordered. Over residues 212 to 225 (QAAAETALEQLTNG) the composition is skewed to low complexity.

Belongs to the ribonuclease III family. As to quaternary structure, homodimer. Requires Mg(2+) as cofactor.

The protein resides in the cytoplasm. It carries out the reaction Endonucleolytic cleavage to 5'-phosphomonoester.. In terms of biological role, digests double-stranded RNA. Involved in the processing of primary rRNA transcript to yield the immediate precursors to the large and small rRNAs (23S and 16S). Processes some mRNAs, and tRNAs when they are encoded in the rRNA operon. Processes pre-crRNA and tracrRNA of type II CRISPR loci if present in the organism. The sequence is that of Ribonuclease 3 from Vibrio parahaemolyticus serotype O3:K6 (strain RIMD 2210633).